A 294-amino-acid polypeptide reads, in one-letter code: Glyceraldehyde-3-phosphate dehydrogenase (294 aa).

NAD(+) is bound by residues D19, R63, and T105. D-glyceraldehyde 3-phosphate contacts are provided by residues 134-136 and T165; that span reads SCT. Catalysis depends on C135, which acts as the Nucleophile. The interval 169–188 is disordered; the sequence is KTVDGPSHKDWRGGRGASQN. D-glyceraldehyde 3-phosphate-binding positions include 194-195 and R217; that span reads TG.

Belongs to the glyceraldehyde-3-phosphate dehydrogenase family. In terms of assembly, homotetramer.

It localises to the cytoplasm. It catalyses the reaction D-glyceraldehyde 3-phosphate + phosphate + NAD(+) = (2R)-3-phospho-glyceroyl phosphate + NADH + H(+). The protein operates within carbohydrate degradation; glycolysis; pyruvate from D-glyceraldehyde 3-phosphate: step 1/5. Its function is as follows. Catalyzes the oxidative phosphorylation of glyceraldehyde 3-phosphate (G3P) to 1,3-bisphosphoglycerate (BPG) using the cofactor NAD. The first reaction step involves the formation of a hemiacetal intermediate between G3P and a cysteine residue, and this hemiacetal intermediate is then oxidized to a thioester, with concomitant reduction of NAD to NADH. The reduced NADH is then exchanged with the second NAD, and the thioester is attacked by a nucleophilic inorganic phosphate to produce BPG. The polypeptide is Glyceraldehyde-3-phosphate dehydrogenase (gap) (Citrobacter freundii).